Consider the following 555-residue polypeptide: Sulfite reductase [ferredoxin] 2 (555 aa).

The disordered stretch occupies residues 1 to 31; that stretch reads MTTARPAKARNEGQWALGNREPLNPNEEMKQ. A cross-link (3'-(S-cysteinyl)-tyrosine (Tyr-Cys)) is located at residues 69-161; it reads YTQREQGYDG…AVGLRTTEAC (93 aa). [4Fe-4S] cluster contacts are provided by cysteine 417, cysteine 423, cysteine 463, and cysteine 467. Residue cysteine 467 coordinates siroheme.

This sequence belongs to the nitrite and sulfite reductase 4Fe-4S domain family. In terms of assembly, monomer. Requires siroheme as cofactor. The cofactor is [4Fe-4S] cluster.

It carries out the reaction hydrogen sulfide + 6 oxidized [2Fe-2S]-[ferredoxin] + 3 H2O = sulfite + 6 reduced [2Fe-2S]-[ferredoxin] + 7 H(+). In terms of biological role, catalyzes the reduction of sulfite to sulfide, a step in the biosynthesis of sulfur-containing amino acids and cofactors. This is Sulfite reductase [ferredoxin] 2 (sir2) from Mycolicibacterium paratuberculosis (strain ATCC BAA-968 / K-10) (Mycobacterium paratuberculosis).